The chain runs to 1605 residues: Sister chromatid cohesion protein PDS5 homolog A (1605 aa).

HEAT repeat units follow at residues 50 to 89 (KSIQ…ITAP), 96 to 136 (NIMK…YRSC), 146 to 183 (DLVK…EESE), 184 to 221 (DVQE…HCAP), 261 to 298 (QALS…LPGR), 302 to 339 (EEFD…SDPL), 341 to 378 (AEAS…SALT), 380 to 416 (IPVD…VYCL), 552 to 591 (ANIW…LYDF), 644 to 681 (SLFD…TIRE), 723 to 758 (KSLS…IAMP), 821 to 860 (AGVD…AAKA), 961 to 1000 (LYPH…QLYL), and 1050 to 1088 (HAIC…KPSE). 2 disordered regions span residues 1155–1182 (LRAQ…KNDV) and 1203–1262 (ESSN…PKVQ). Positions 1211–1225 (SPSERAEICQRDQKG) are enriched in basic and acidic residues. The Nuclear localization signal 1 motif lies at 1226 to 1233 (NKRNVGDA). A Phosphoserine modification is found at S1274. The segment covering 1279-1295 (NVSLDSHDENSDQEKML) has biased composition (basic and acidic residues). 3 disordered regions span residues 1279–1307 (NVSL…KKSL), 1324–1353 (ERSR…SGLA), and 1423–1605 (GKTA…RTAI). S1299 is subject to Phosphoserine. Basic residues-rich tracts occupy residues 1425–1442 (TAKK…KRSS) and 1464–1476 (KGKR…LKQL). The Nuclear localization signal 2 signature appears at 1426 to 1433 (AKKSRTSK). Basic and acidic residues-rich tracts occupy residues 1477–1495 (HPKD…VESR), 1514–1527 (GEEK…SLKE), and 1534–1574 (VVNK…NEME). Phosphoserine occurs at positions 1524, 1562, and 1584. A compositionally biased stretch (acidic residues) spans 1575–1585 (REAEENAETSD). Phosphothreonine is present on T1588.

Belongs to the PDS5 family. Interacts with the cohesin complex. Interacts with DEK3.

It is found in the nucleus. Its function is as follows. Cohesin cofactor dispensable during the meiotic division but playing an important role in DNA repair by homologous recombination (HR) probably by helping SMC5/SMC6 complex. Regulator of sister chromatid cohesion in mitosis which may stabilize cohesin complex association with chromatin. May couple sister chromatid cohesion during mitosis to DNA replication. Cohesion ensures that chromosome partitioning is accurate in both meiotic and mitotic cells and plays an important role in DNA repair. The protein is Sister chromatid cohesion protein PDS5 homolog A of Arabidopsis thaliana (Mouse-ear cress).